A 312-amino-acid polypeptide reads, in one-letter code: Porphobilinogen deaminase (312 aa).

Cysteine 241 carries the post-translational modification S-(dipyrrolylmethanemethyl)cysteine.

This sequence belongs to the HMBS family. As to quaternary structure, monomer. Requires dipyrromethane as cofactor.

The enzyme catalyses 4 porphobilinogen + H2O = hydroxymethylbilane + 4 NH4(+). The protein operates within porphyrin-containing compound metabolism; protoporphyrin-IX biosynthesis; coproporphyrinogen-III from 5-aminolevulinate: step 2/4. In terms of biological role, tetrapolymerization of the monopyrrole PBG into the hydroxymethylbilane pre-uroporphyrinogen in several discrete steps. The polypeptide is Porphobilinogen deaminase (Pelotomaculum thermopropionicum (strain DSM 13744 / JCM 10971 / SI)).